We begin with the raw amino-acid sequence, 279 residues long: Tryptophan synthase alpha chain (279 aa).

Active-site proton acceptor residues include Glu50 and Asp61.

Belongs to the TrpA family. In terms of assembly, tetramer of two alpha and two beta chains.

It catalyses the reaction (1S,2R)-1-C-(indol-3-yl)glycerol 3-phosphate + L-serine = D-glyceraldehyde 3-phosphate + L-tryptophan + H2O. It functions in the pathway amino-acid biosynthesis; L-tryptophan biosynthesis; L-tryptophan from chorismate: step 5/5. Functionally, the alpha subunit is responsible for the aldol cleavage of indoleglycerol phosphate to indole and glyceraldehyde 3-phosphate. The polypeptide is Tryptophan synthase alpha chain (Brucella suis (strain ATCC 23445 / NCTC 10510)).